The sequence spans 461 residues: Chromosomal replication initiator protein DnaA (461 aa).

Residues 1–84 (MAVSLWQQCI…RFDIGSRPSA (84 aa)) are domain I, interacts with DnaA modulators. The tract at residues 84-124 (AKKFEPAPVATVRAPNTQTKATVGTYFNTQAEPIANANHRS) is domain II. The domain III, AAA+ region stretch occupies residues 125 to 341 (NINPTYQFDN…GALNRVIANA (217 aa)). The ATP site is built by Gly169, Gly171, Lys172, and Thr173. The interval 342–461 (NFTGRPITID…YANLIRTLSS (120 aa)) is domain IV, binds dsDNA.

This sequence belongs to the DnaA family. As to quaternary structure, oligomerizes as a right-handed, spiral filament on DNA at oriC.

Its subcellular location is the cytoplasm. Its function is as follows. Plays an essential role in the initiation and regulation of chromosomal replication. ATP-DnaA binds to the origin of replication (oriC) to initiate formation of the DNA replication initiation complex once per cell cycle. Binds the DnaA box (a 9 base pair repeat at the origin) and separates the double-stranded (ds)DNA. Forms a right-handed helical filament on oriC DNA; dsDNA binds to the exterior of the filament while single-stranded (ss)DNA is stabiized in the filament's interior. The ATP-DnaA-oriC complex binds and stabilizes one strand of the AT-rich DNA unwinding element (DUE), permitting loading of DNA polymerase. After initiation quickly degrades to an ADP-DnaA complex that is not apt for DNA replication. Binds acidic phospholipids. This chain is Chromosomal replication initiator protein DnaA, found in Shewanella putrefaciens (strain CN-32 / ATCC BAA-453).